We begin with the raw amino-acid sequence, 458 residues long: O-acyltransferase WSD (458 aa).

The active-site Proton acceptor is the His-133.

Belongs to the long-chain O-acyltransferase family.

It carries out the reaction a long chain fatty alcohol + a fatty acyl-CoA = a wax ester + CoA. The enzyme catalyses an acyl-CoA + a 1,2-diacyl-sn-glycerol = a triacyl-sn-glycerol + CoA. Its pathway is glycerolipid metabolism; triacylglycerol biosynthesis. Functionally, bifunctional wax ester synthase/diacylglycerol acyltransferase (WS and DGAT). Catalyzes the terminal and only committed step in triacylglycerol synthesis by using diacylglycerol and fatty acyl CoA as substrates. Required for storage lipid synthesis. WS uses C(12)-CoA to C(18)-CoA substrates whereas DGAT prefers C(20)-CoA. Upon expression in E.coli and Pseudomonas citronellolis (DSM 50332) both WS and DGAT activities increase. In Acinetobacter baylyi (strain ATCC 33305 / BD413 / ADP1), this protein is O-acyltransferase WSD (wax-dgaT).